The sequence spans 226 residues: MKEIIHNSWQNILSAEFEKPYYQELREFLKKEYQTQTIYPDMYHLFSALELTPFEEVKVVILGQDPYHGPNQAHGLSFSVQPGVKVPPSLANIYKELQADLGYQPVNHGFLESWAKQGVLLLNTVLTVRAGQAYSHRGKGWEQLTDVIIEKLNEREKPVVFILWGRPAQEKIKMIDTTRHVIIKSPHPSPLSAHRGFFGSRPFSQANAALERLGETPIDWQLPETV.

Catalysis depends on aspartate 65, which acts as the Proton acceptor.

This sequence belongs to the uracil-DNA glycosylase (UDG) superfamily. UNG family.

It is found in the cytoplasm. The catalysed reaction is Hydrolyzes single-stranded DNA or mismatched double-stranded DNA and polynucleotides, releasing free uracil.. In terms of biological role, excises uracil residues from the DNA which can arise as a result of misincorporation of dUMP residues by DNA polymerase or due to deamination of cytosine. This Enterococcus faecalis (strain ATCC 700802 / V583) protein is Uracil-DNA glycosylase.